Consider the following 202-residue polypeptide: Ribonuclease HII (202 aa).

An RNase H type-2 domain is found at 12-201 (LLIAGVDEAG…VRQLKLFIPE (190 aa)). A divalent metal cation contacts are provided by Asp-18, Glu-19, and Asp-110.

Belongs to the RNase HII family. Mn(2+) is required as a cofactor. Mg(2+) serves as cofactor.

It is found in the cytoplasm. It carries out the reaction Endonucleolytic cleavage to 5'-phosphomonoester.. Its function is as follows. Endonuclease that specifically degrades the RNA of RNA-DNA hybrids. In Coxiella burnetii (strain CbuK_Q154) (Coxiella burnetii (strain Q154)), this protein is Ribonuclease HII.